The chain runs to 256 residues: Hemin import ATP-binding protein HmuV (256 aa).

One can recognise an ABC transporter domain in the interval 2–239 (IHAFAVSVIR…ANVREVYQVD (238 aa)). 34-41 (GPNGAGKS) provides a ligand contact to ATP.

The protein belongs to the ABC transporter superfamily. Heme (hemin) importer (TC 3.A.1.14.5) family. In terms of assembly, the complex is composed of two ATP-binding proteins (HmuV), two transmembrane proteins (HmuU) and a solute-binding protein (HmuT).

The protein localises to the cell inner membrane. Its function is as follows. Part of the ABC transporter complex HmuTUV involved in hemin import. Responsible for energy coupling to the transport system. This is Hemin import ATP-binding protein HmuV from Hahella chejuensis (strain KCTC 2396).